A 152-amino-acid polypeptide reads, in one-letter code: Ferredoxin-thioredoxin reductase catalytic chain, chloroplastic (152 aa).

Residues 1 to 38 constitute a chloroplast transit peptide; the sequence is MTSTVTTTVGCGGLPVRPLSTATRGRPRRCAVRAQAAG. A [4Fe-4S] cluster-binding site is contributed by cysteine 91. Cysteine 93 acts as the Nucleophile in catalysis. A disulfide bridge connects residues cysteine 93 and cysteine 123. [4Fe-4S] cluster contacts are provided by cysteine 110, cysteine 112, and cysteine 121.

This sequence belongs to the ferredoxin thioredoxin reductase beta subunit family. Heterodimer of subunit A (variable subunit) and subunit B (catalytic subunit). Heterodimeric FTR forms a complex with ferredoxin and thioredoxin. It depends on [4Fe-4S] cluster as a cofactor.

The protein localises to the plastid. It localises to the chloroplast. It catalyses the reaction [thioredoxin]-disulfide + 2 reduced [2Fe-2S]-[ferredoxin] + 2 H(+) = [thioredoxin]-dithiol + 2 oxidized [2Fe-2S]-[ferredoxin]. Functionally, catalytic subunit of the ferredoxin-thioredoxin reductase (FTR), which catalyzes the two-electron reduction of thioredoxins by the electrons provided by reduced ferredoxin. This is Ferredoxin-thioredoxin reductase catalytic chain, chloroplastic (FTRC) from Zea mays (Maize).